The following is a 181-amino-acid chain: Transcription termination/antitermination protein NusG (181 aa).

The 32-residue stretch at 130–161 folds into the KOW domain; it reads PGELVRVSDGPFADFNGVVEEVDYEKSRLKVS.

It belongs to the NusG family. In terms of assembly, monomer. Interacts with the transcription termination factor Rho and with RNA polymerase.

Functionally, participates in transcription elongation, termination and antitermination. In the absence of Rho, increases the rate of transcription elongation by the RNA polymerase (RNAP), probably by partially suppressing pausing. In the presence of Rho, modulates most Rho-dependent termination events by interacting with the RNAP to render the complex more susceptible to the termination activity of Rho. May be required to overcome a kinetic limitation of Rho to function at certain terminators. Also involved in ribosomal RNA transcriptional antitermination. This is Transcription termination/antitermination protein NusG from Yersinia pestis.